Here is a 251-residue protein sequence, read N- to C-terminus: Triosephosphate isomerase (251 aa).

Residue 9-11 (NWK) coordinates substrate. The active-site Electrophile is His95. Glu167 acts as the Proton acceptor in catalysis. Substrate is bound by residues Gly173, Ser213, and 234–235 (GG). Position 213 is a phosphoserine (Ser213).

The protein belongs to the triosephosphate isomerase family. In terms of assembly, homodimer.

The protein localises to the cytoplasm. It carries out the reaction D-glyceraldehyde 3-phosphate = dihydroxyacetone phosphate. Its pathway is carbohydrate biosynthesis; gluconeogenesis. It participates in carbohydrate degradation; glycolysis; D-glyceraldehyde 3-phosphate from glycerone phosphate: step 1/1. Its function is as follows. Involved in the gluconeogenesis. Catalyzes stereospecifically the conversion of dihydroxyacetone phosphate (DHAP) to D-glyceraldehyde-3-phosphate (G3P). This is Triosephosphate isomerase from Bacillus cereus (strain AH820).